A 99-amino-acid chain; its full sequence is Plastocyanin (99 aa).

The Plastocyanin-like domain occupies 1-99 (AEVLLGSSDG…AGMVGKVTVN (99 aa)). Cu cation-binding residues include His37, Cys84, His87, and Met92.

Belongs to the plastocyanin family. Cu(2+) serves as cofactor.

It localises to the plastid. It is found in the chloroplast thylakoid membrane. In terms of biological role, participates in electron transfer between P700 and the cytochrome b6-f complex in photosystem I. The protein is Plastocyanin (PETE) of Lactuca sativa (Garden lettuce).